Reading from the N-terminus, the 364-residue chain is GDSL esterase/lipase EXL3 (364 aa).

Positions 1–32 (MKDNSSWSCSCSWSSWKICLLSVLFLTETITA) are cleaved as a signal peptide. Serine 50 serves as the catalytic Nucleophile. Residues aspartate 339 and histidine 342 contribute to the active site.

It belongs to the 'GDSL' lipolytic enzyme family. As to expression, flower buds.

The protein resides in the secreted. The chain is GDSL esterase/lipase EXL3 (EXL3) from Arabidopsis thaliana (Mouse-ear cress).